The sequence spans 237 residues: Neural retina-specific leucine zipper protein (237 aa).

Glycyl lysine isopeptide (Lys-Gly) (interchain with G-Cter in SUMO) cross-links involve residues Lys20 and Lys24. The tract at residues Glu26 to Ala64 is disordered. The tract at residues Gly30 to Asp93 is minimal transactivation domain (MTD). Residues Arg159–Arg185 form a basic motif region. The 64-residue stretch at Arg159–Leu222 folds into the bZIP domain. Positions Leu187 to Leu208 are leucine-zipper.

This sequence belongs to the bZIP family. In terms of assembly, interacts with FIZ1; this interaction represses transactivation. Interacts (via the leucine-zipper domain) with CRX. Post-translationally, disumoylated at Lys-20. Sumoylation modulates the transcriptional activity of NRL on RHO and NR2E3 promoters, and is required for normal rod differentiation. In terms of processing, phosphorylated. Expressed in the retina (at protein level).

It localises to the cytoplasm. Its subcellular location is the nucleus. Functionally, acts as a transcriptional activator which regulates the expression of several rod-specific genes, including RHO and PDE6B. Also functions as a transcriptional coactivator, stimulating transcription mediated by the transcription factor CRX and NR2E3. Binds to the rhodopsin promoter in a sequence-specific manner. The sequence is that of Neural retina-specific leucine zipper protein (Nrl) from Mus musculus (Mouse).